The following is a 385-amino-acid chain: Glucans biosynthesis protein C (385 aa).

10 consecutive transmembrane segments (helical) span residues 17-37, 60-80, 91-111, 137-157, 173-193, 212-232, 239-259, 274-294, 311-331, and 338-358; these read AWLM…SHTW, MQVF…RYPL, VGIP…IMLQ, ISHL…VWIF, KFSM…YAVI, FIVM…LAFI, LFTT…VAYL, TESV…FSFG, ASLF…AYIT, and WLGF…LYEI.

This sequence belongs to the acyltransferase 3 family. OpgC subfamily.

It is found in the cell membrane. Its pathway is glycan metabolism; osmoregulated periplasmic glucan (OPG) biosynthesis. Its function is as follows. Necessary for the succinyl substitution of periplasmic glucans. Could catalyze the transfer of succinyl residues from the cytoplasmic side of the membrane to the nascent glucan backbones on the periplasmic side of the membrane. This is Glucans biosynthesis protein C from Shigella sonnei (strain Ss046).